Here is a 373-residue protein sequence, read N- to C-terminus: tRNA-specific 2-thiouridylase MnmA (373 aa).

Residues 12–19 (GMSGGVDS) and methionine 38 each bind ATP. Residues 98–100 (NPD) are interaction with target base in tRNA. Cysteine 103 acts as the Nucleophile in catalysis. Cysteine 103 and cysteine 200 are joined by a disulfide. Residue glycine 127 participates in ATP binding. The interval 150–152 (KDQ) is interaction with tRNA. Residue cysteine 200 is the Cysteine persulfide intermediate of the active site. Residues 312-313 (RY) are interaction with tRNA.

The protein belongs to the MnmA/TRMU family.

Its subcellular location is the cytoplasm. It catalyses the reaction S-sulfanyl-L-cysteinyl-[protein] + uridine(34) in tRNA + AH2 + ATP = 2-thiouridine(34) in tRNA + L-cysteinyl-[protein] + A + AMP + diphosphate + H(+). Catalyzes the 2-thiolation of uridine at the wobble position (U34) of tRNA, leading to the formation of s(2)U34. The sequence is that of tRNA-specific 2-thiouridylase MnmA from Streptococcus pneumoniae (strain P1031).